The chain runs to 156 residues: Small ribosomal subunit protein uS7 (156 aa).

The protein belongs to the universal ribosomal protein uS7 family. As to quaternary structure, part of the 30S ribosomal subunit. Contacts proteins S9 and S11.

Functionally, one of the primary rRNA binding proteins, it binds directly to 16S rRNA where it nucleates assembly of the head domain of the 30S subunit. Is located at the subunit interface close to the decoding center, probably blocks exit of the E-site tRNA. The sequence is that of Small ribosomal subunit protein uS7 from Lactobacillus helveticus (strain DPC 4571).